Reading from the N-terminus, the 226-residue chain is Chalcone--flavanone isomerase (226 aa).

Residues Thr-47, Asn-112, and Ser-189 each coordinate substrate.

This sequence belongs to the chalcone isomerase family.

The enzyme catalyses a chalcone = a flavanone.. The protein operates within secondary metabolite biosynthesis; flavonoid biosynthesis. Functionally, catalyzes the intramolecular cyclization of bicyclic chalcones into tricyclic (S)-flavanones. Responsible for the isomerization of 4,2',4',6'-tetrahydroxychalcone (also termed chalcone) into naringenin. This is Chalcone--flavanone isomerase (CHI) from Allium cepa (Onion).